The following is a 277-amino-acid chain: MALKQFNPTTPGQRQLVIVDRSCLYKGKSVKTLTEGLSSKGGRNNRGRVTARFQGGGHKRSYRFVDFKRFKRDVPAKVERLEYDPNRTAFIALIRYEDGQLSYILAPQRLDVGDSVIAGSNVDIKPGNAMPLGNMPVGTIIHNVEMKPGKGGQIARSAGAYAQLVGRDQGMAILRLNSGEQRLVSSGCFATVGAVSNPDHANINDGKAGRSRWRGRRPHVRGVAMNPVDHPHGGGEGRTSGGRHPVSPWGKPTKGKRTRSNKATDKFIMRTRHQRKK.

The disordered stretch occupies residues Gly222–Lys277.

It belongs to the universal ribosomal protein uL2 family. As to quaternary structure, part of the 50S ribosomal subunit. Forms a bridge to the 30S subunit in the 70S ribosome.

Its function is as follows. One of the primary rRNA binding proteins. Required for association of the 30S and 50S subunits to form the 70S ribosome, for tRNA binding and peptide bond formation. It has been suggested to have peptidyltransferase activity; this is somewhat controversial. Makes several contacts with the 16S rRNA in the 70S ribosome. In Bartonella henselae (strain ATCC 49882 / DSM 28221 / CCUG 30454 / Houston 1) (Rochalimaea henselae), this protein is Large ribosomal subunit protein uL2.